Here is a 76-residue protein sequence, read N- to C-terminus: Large ribosomal subunit protein uL29 (76 aa).

The protein belongs to the universal ribosomal protein uL29 family.

This Corynebacterium aurimucosum (strain ATCC 700975 / DSM 44827 / CIP 107346 / CN-1) (Corynebacterium nigricans) protein is Large ribosomal subunit protein uL29.